We begin with the raw amino-acid sequence, 227 residues long: tRNA (guanine-N(7)-)-methyltransferase (227 aa).

Positions 60, 85, 112, and 135 each coordinate S-adenosyl-L-methionine. Asp135 is an active-site residue. Substrate is bound by residues Lys139, Asp171, and Thr206 to Glu209.

This sequence belongs to the class I-like SAM-binding methyltransferase superfamily. TrmB family.

The enzyme catalyses guanosine(46) in tRNA + S-adenosyl-L-methionine = N(7)-methylguanosine(46) in tRNA + S-adenosyl-L-homocysteine. It functions in the pathway tRNA modification; N(7)-methylguanine-tRNA biosynthesis. In terms of biological role, catalyzes the formation of N(7)-methylguanine at position 46 (m7G46) in tRNA. The polypeptide is tRNA (guanine-N(7)-)-methyltransferase (Thiobacillus denitrificans (strain ATCC 25259 / T1)).